The following is a 125-amino-acid chain: Cystatin-like cysteine protease inhibitor EPIC2B (125 aa).

Residues 1–21 form the signal peptide; the sequence is MSFLRPTLALLAVTALVTTSG. Asn45 is a glycosylation site (N-linked (GlcNAc...) asparagine). Residues 68 to 72 carry the Secondary area of contact motif; it reads QVVSG.

The protein belongs to the cystatin family. In terms of assembly, interacts with the host papain-like cysteine protease PIP1. Interacts with the host papain-like cysteine protease RCR3. Interacts with the host papain-like cysteine protease C14.

Its subcellular location is the secreted. Secreted effector that interacts with and inhibits the pathogenesis-related papain-like cysteine proteases C14, PIP1 and RCR3 of host plants. Inhibition of host proteases by a pathogen extracellular protease inhibitor forms a specific type of defense-counterdefense mechanism between plants and microbial pathogens. In Phytophthora infestans (Potato late blight agent), this protein is Cystatin-like cysteine protease inhibitor EPIC2B.